Reading from the N-terminus, the 113-residue chain is MAKGGFPGFGGNINNLVKQAQKMQRDMERVQEELKEKTVEASAGGGAVTVVATGRKDIKEITIKPEVVDPDDVEMLQDLILAAVNEALRKADEMVTAEISKITGGLGGIPGLF.

Belongs to the YbaB/EbfC family. As to quaternary structure, homodimer.

It localises to the cytoplasm. The protein resides in the nucleoid. Functionally, binds to DNA and alters its conformation. May be involved in regulation of gene expression, nucleoid organization and DNA protection. The polypeptide is Nucleoid-associated protein Cthe_2143 (Acetivibrio thermocellus (strain ATCC 27405 / DSM 1237 / JCM 9322 / NBRC 103400 / NCIMB 10682 / NRRL B-4536 / VPI 7372) (Clostridium thermocellum)).